The following is a 185-amino-acid chain: MAEATYTPKLRTFYDEVVRPKMIEQFGYKNPMEVPTIDKIVINMGVGEATADTKKVTTAAADLAQIAGQKPVITRARKAISNFKLRENQPVGAKVTLRKARMYEFMDRLVSIALPRVRDFRGLNPKSFDGRGNYAMGVKEHIVFPEINYDRVEQIWGMDIIVCTTAKTDEEARALLKAFNFPFRQ.

Belongs to the universal ribosomal protein uL5 family. As to quaternary structure, part of the 50S ribosomal subunit; part of the 5S rRNA/L5/L18/L25 subcomplex. Contacts the 5S rRNA and the P site tRNA. Forms a bridge to the 30S subunit in the 70S ribosome.

Functionally, this is one of the proteins that bind and probably mediate the attachment of the 5S RNA into the large ribosomal subunit, where it forms part of the central protuberance. In the 70S ribosome it contacts protein S13 of the 30S subunit (bridge B1b), connecting the 2 subunits; this bridge is implicated in subunit movement. Contacts the P site tRNA; the 5S rRNA and some of its associated proteins might help stabilize positioning of ribosome-bound tRNAs. The chain is Large ribosomal subunit protein uL5 from Xanthobacter autotrophicus (strain ATCC BAA-1158 / Py2).